The primary structure comprises 474 residues: MSIQAPPRLLELAGQSLLRDQALSISAMEELPRVLYLPLFMEAFRRRHFQTLTVMVQAWPFTCLPLGSLMKTLHLETLKALLEGLHMLLTQKDRPRRWKLQVLDLRDVDENFWARWPGAWALSCFPETMSKRQTAEDCPRMGEHQPLKVFIDICLKEIPQDECLRYLFQWVYQRRGLVHLCCSKLVNYLTPIKHLRKSLKIIYLNSIQQLEIRNMSWPRLIRKLRCYLKEMKNLRKLVFSRCHHSMSDNELEGRLVTKFSSVFLRLEHLQLLKIKLITFFSGHLEQLIRCLQNPLENLELTYGYLLEEDMKCLSQYPSLGYLKHLNLSYVLLFRISLEPLGALLEKIAASLETLILEGCQIHYSQLSAILPGLSHCSQLTTFYFGRNCMSMGALKDLLCHTSGLSKLSLETYPAPEESLNSLVRVDWEIFALLRAELMCTLREVRQPKRIFIGPTPCPSCGSSPSEELELHLCC.

LRR repeat units lie at residues 15 to 38 (QSLLRDQALSISAMEELPRVLYLP), 204 to 229 (LNSIQQLEIRNMSWPRLIRKLRCYLK), 271 to 294 (LLKIKLITFFSGHLEQLIRCLQNP), 319 to 342 (LGYLKHLNLSYVLLFRISLEPLGA), and 391 to 414 (MGALKDLLCHTSGLSKLSLETYPA).

The protein belongs to the PRAME family.

The sequence is that of PRAME family member 14 from Homo sapiens (Human).